The following is a 230-amino-acid chain: Uracil-DNA glycosylase (230 aa).

Catalysis depends on Asp70, which acts as the Proton acceptor.

It belongs to the uracil-DNA glycosylase (UDG) superfamily. UNG family.

The protein resides in the cytoplasm. The catalysed reaction is Hydrolyzes single-stranded DNA or mismatched double-stranded DNA and polynucleotides, releasing free uracil.. Functionally, excises uracil residues from the DNA which can arise as a result of misincorporation of dUMP residues by DNA polymerase or due to deamination of cytosine. The chain is Uracil-DNA glycosylase from Pseudomonas savastanoi pv. phaseolicola (strain 1448A / Race 6) (Pseudomonas syringae pv. phaseolicola (strain 1448A / Race 6)).